A 378-amino-acid polypeptide reads, in one-letter code: Transcription elongation factor TFIIS (378 aa).

Met1 carries the N-acetylmethionine modification. The 80-residue stretch at 10–89 folds into the TFIIS N-terminal domain; that stretch reads EGAKKAADAA…EIWKKVVIEE (80 aa). Positions 210–333 constitute a TFIIS central domain; sequence VRDKIRELLV…DCERGLAAKA (124 aa). The TFIIS-type zinc-finger motif lies at 336–376; sequence DQFKCGRCGQRKCTYYQMQTRSADEPMTTYVTCVNCDNHWK. Zn(2+) contacts are provided by Cys340, Cys343, Cys368, and Cys371.

In terms of tissue distribution, expressed in roots, leaves and flowers.

The protein resides in the nucleus. Functionally, necessary for efficient RNA polymerase II transcription elongation past template-encoded arresting sites. Involved in the control of seed dormancy and germination. The protein is Transcription elongation factor TFIIS of Arabidopsis thaliana (Mouse-ear cress).